The chain runs to 388 residues: Succinate--CoA ligase [ADP-forming] subunit beta (388 aa).

The region spanning 9–244 (KQLFAEYGLP…PSQEDEREAH (236 aa)) is the ATP-grasp domain. ATP-binding positions include K46, 53–55 (GRG), E99, T102, and E107. N199 and D213 together coordinate Mg(2+). Residues N264 and 321-323 (GIV) each bind substrate.

It belongs to the succinate/malate CoA ligase beta subunit family. As to quaternary structure, heterotetramer of two alpha and two beta subunits. Mg(2+) serves as cofactor.

The catalysed reaction is succinate + ATP + CoA = succinyl-CoA + ADP + phosphate. It catalyses the reaction GTP + succinate + CoA = succinyl-CoA + GDP + phosphate. It functions in the pathway carbohydrate metabolism; tricarboxylic acid cycle; succinate from succinyl-CoA (ligase route): step 1/1. Succinyl-CoA synthetase functions in the citric acid cycle (TCA), coupling the hydrolysis of succinyl-CoA to the synthesis of either ATP or GTP and thus represents the only step of substrate-level phosphorylation in the TCA. The beta subunit provides nucleotide specificity of the enzyme and binds the substrate succinate, while the binding sites for coenzyme A and phosphate are found in the alpha subunit. In Colwellia psychrerythraea (strain 34H / ATCC BAA-681) (Vibrio psychroerythus), this protein is Succinate--CoA ligase [ADP-forming] subunit beta.